A 314-amino-acid chain; its full sequence is DNA-directed RNA polymerase subunit alpha (314 aa).

The interval 1 to 228 (MIEIEKPKIE…EHLNIFVGLT (228 aa)) is alpha N-terminal domain (alpha-NTD). The alpha C-terminal domain (alpha-CTD) stretch occupies residues 245–314 (KEKVLEMTIE…ELGLGLRKDD (70 aa)).

This sequence belongs to the RNA polymerase alpha chain family. As to quaternary structure, homodimer. The RNAP catalytic core consists of 2 alpha, 1 beta, 1 beta' and 1 omega subunit. When a sigma factor is associated with the core the holoenzyme is formed, which can initiate transcription.

The enzyme catalyses RNA(n) + a ribonucleoside 5'-triphosphate = RNA(n+1) + diphosphate. Functionally, DNA-dependent RNA polymerase catalyzes the transcription of DNA into RNA using the four ribonucleoside triphosphates as substrates. The sequence is that of DNA-directed RNA polymerase subunit alpha from Bacillus thuringiensis (strain Al Hakam).